The following is an 84-amino-acid chain: UPF0248 protein PF1300 (84 aa).

Belongs to the UPF0248 family.

This Pyrococcus furiosus (strain ATCC 43587 / DSM 3638 / JCM 8422 / Vc1) protein is UPF0248 protein PF1300.